Here is a 784-residue protein sequence, read N- to C-terminus: MQPKVLHTLEFDKVKEQLAEHASSPLGLEKIDALMPSSDLEEVAAWLDETDEAAAVLRLAGYVPLDGVVDIRPHLKRAAIGGTLSPQELLEVAATSAASRQMKRLIAGLYDEHGGLERLFRYADTLAEAPELEHDVRRSIDDHGEVLDAASDRLRSLRGQIRSVEARIREKLESIIRSPSAQKRLSDAIITIRNDRYVIPVKQEYRGAYGGIVHDQSASGATLFIEPQAVVELNNALREARAKEKQEIERILRELSAKVAEQAEPLARTVEALAALDFAFAKAKYARRLQAAKPAVNSRGYLRFLQARHPLLDQEKAVPNDIELGGDYTTIVITGPNTGGKTVTLKTIGLLTLMAQAGLFIPAADGSEAAVFRSVFADIGDEQSIEQSLSTFSSHMVNIVDILRHVDGESLVLFDELGAGTDPQEGAALAIAILDEVHGRGARTVATTHYPELKAYGYNRPGVVNASVEFDTETLRPTYKLLIGIPGRSNAFDISRRLGLDERIIERAKAQVSAESHNVENMIASLERSKKQAEEDEARARAALEEAERLRAEWEQKWEELEEEKAERLAEATQKAADIIRAAEREAERIIQELRRLQKEKQAEVKEHELVEAKQRLAAAMPKVEKRKKAKKAASRHVFQPGDEVKVTSLNQKGYLIEKVSDDEWQVQLGILKMKIHERDLEYIGSAPAKDVTPIATVKGKDAHVSLELDLRGERYEDALIRLEKYLDDAVLAGYARVSIIHGKGTGALRQGVQQFLKQHRAVKSFRFGEANEGGTGVTIVELK.

335–342 (GPNTGGKT) lines the ATP pocket. In terms of domain architecture, Smr spans 709 to 784 (LDLRGERYED…GTGVTIVELK (76 aa)).

This sequence belongs to the DNA mismatch repair MutS family. MutS2 subfamily. As to quaternary structure, homodimer. Binds to stalled ribosomes, contacting rRNA.

Functionally, endonuclease that is involved in the suppression of homologous recombination and thus may have a key role in the control of bacterial genetic diversity. Acts as a ribosome collision sensor, splitting the ribosome into its 2 subunits. Detects stalled/collided 70S ribosomes which it binds and splits by an ATP-hydrolysis driven conformational change. Acts upstream of the ribosome quality control system (RQC), a ribosome-associated complex that mediates the extraction of incompletely synthesized nascent chains from stalled ribosomes and their subsequent degradation. Probably generates substrates for RQC. This Geobacillus kaustophilus (strain HTA426) protein is Endonuclease MutS2.